We begin with the raw amino-acid sequence, 800 residues long: Protein MICRORCHIDIA 4 (800 aa).

Disordered stretches follow at residues 1–76 (MEPI…ARSD) and 552–702 (AKRQ…RTLS). Over residues 9-18 (NPVTTSTLST) the composition is skewed to polar residues. Positions 36–47 (ELSSSNEGSELG) are enriched in low complexity. Composition is skewed to basic and acidic residues over residues 559-578 (SAKD…EFDP) and 628-641 (VSKD…EKGG). Residues 666-675 (NSDDDYDCDS) show a composition bias toward acidic residues. The stretch at 699-766 (RTLSQLEQEN…QASLIDVFAE (68 aa)) forms a coiled coil. Short sequence motifs (nuclear localization signal) lie at residues 716 to 723 (DKKEEVFL) and 735 to 742 (LRKTLEAE).

It belongs to the MORC ATPase protein family. As to quaternary structure, homodimer and heterodimer. Component of an RNA-directed DNA methylation (RdDM) complex. Forms homomeric complexes. It depends on Mg(2+) as a cofactor. Requires Mn(2+) as cofactor.

It is found in the nucleus. Its function is as follows. Exhibits ATPase activity. Binds DNA/RNA in a non-specific manner and exhibits endonuclease activity. Probably involved in DNA repair. Involved in RNA-directed DNA methylation (RdDM) as a component of the RdDM machinery and required for gene silencing. May also be involved in the regulation of chromatin architecture to maintain gene silencing. Together with MORC7, acts to suppress a wide set of non-methylated protein-coding genes, especially involved in pathogen response. Positive regulator of defense against the oomycete Hyaloperonospora arabidopsidis (Hpa). In Arabidopsis thaliana (Mouse-ear cress), this protein is Protein MICRORCHIDIA 4.